Consider the following 510-residue polypeptide: Protein disulfide-isomerase (510 aa).

The signal sequence occupies residues 1 to 19; it reads MLRRALLCLAVAAAPGLYA. The 117-residue stretch at 20-136 folds into the Thioredoxin 1 domain; the sequence is DAPEEEDHVL…IVNWLKKRTG (117 aa). Catalysis depends on nucleophile residues C55 and C58. The cysteines at positions 55 and 58 are disulfide-linked. K202 is modified (N6-acetyllysine). 2 positions are modified to N6-succinyllysine: K224 and K273. Phosphoserine is present on residues S333 and S359. A Thioredoxin 2 domain is found at 351–477; sequence GKIKPHLMSQ…FKKFLESGGQ (127 aa). Active-site nucleophile residues include C399 and C402. C399 and C402 form a disulfide bridge. Phosphoserine is present on S429. Residues 473-510 are disordered; the sequence is ESGGQDGAGDDDDLEDLEEAEEPDMEEDDDQKAVKDEL. Positions 480–502 are enriched in acidic residues; that stretch reads AGDDDDLEDLEEAEEPDMEEDDD. The Prevents secretion from ER motif lies at 507-510; the sequence is KDEL.

This sequence belongs to the protein disulfide isomerase family. As to quaternary structure, heterodimer; heterodimerizes with the protein microsomal triglyceride transfer MTTP. Homodimer. Homodimer. Monomers and homotetramers may also occur. Interacts with P4HA2, forming a heterotetramer consisting of 2 alpha subunits (P4HA2) and 2 beta (P4HB), where P4HB plays the role of a structural subunit; this tetramer catalyzes the formation of 4-hydroxyproline in collagen. Also constitutes the structural subunit of the microsomal triacylglycerol transfer protein MTTP in mammalian cells. Stabilizes both enzymes and retain them in the ER without contributing to the catalytic activity. Binds UBQLN1. Interacts with ERO1B. Interacts with ILDR2. Interacts with ERN1/IRE1A (via N-terminus); the interaction is enhanced by phosphorylation of P4HB by FAM20C in response to endoplasmic reticulum stress and results in attenuation of ERN1 activity. Post-translationally, phosphorylation of Ser-359 by FAM20C is induced by endoplasmic reticulum stress and results in a functional switch from oxidoreductase to molecular chaperone. It also promotes interaction with ERN1.

Its subcellular location is the endoplasmic reticulum. It localises to the endoplasmic reticulum lumen. It is found in the melanosome. The protein resides in the cell membrane. It carries out the reaction Catalyzes the rearrangement of -S-S- bonds in proteins.. This multifunctional protein catalyzes the formation, breakage and rearrangement of disulfide bonds. At the cell surface, seems to act as a reductase that cleaves disulfide bonds of proteins attached to the cell. May therefore cause structural modifications of exofacial proteins. Inside the cell, seems to form/rearrange disulfide bonds of nascent proteins. At high concentrations and following phosphorylation by FAM20C, functions as a chaperone that inhibits aggregation of misfolded proteins. At low concentrations, facilitates aggregation (anti-chaperone activity). May be involved with other chaperones in the structural modification of the TG precursor in hormone biogenesis. Also acts as a structural subunit of various enzymes such as prolyl 4-hydroxylase and microsomal triacylglycerol transfer protein MTTP. Receptor for LGALS9; the interaction retains P4HB at the cell surface of Th2 T helper cells, increasing disulfide reductase activity at the plasma membrane, altering the plasma membrane redox state and enhancing cell migration. This chain is Protein disulfide-isomerase (P4HB), found in Macaca fuscata fuscata (Japanese macaque).